We begin with the raw amino-acid sequence, 86 residues long: F(1)-ATPase inhibitor STF1, mitochondrial (86 aa).

Residues 1 to 23 constitute a mitochondrion transit peptide; it reads MLNRCISRNTRLPVNLRIASRFY. A Phosphoserine modification is found at Ser24.

The protein belongs to the ATPase inhibitor family. As to quaternary structure, monomer and homodimer. Monomeric at pH 5.0 and dimeric at either pH 6.5 or 8.0. The protein aggregates increasingly strongly with increasing pH.

Its subcellular location is the mitochondrion. Endogenous low-affinity ATPase inhibitor, which inhibits specifically the reverse ATPase reaction of mitochondrial F(1)F(0)-type ATP synthase. Found to stabilize, together with STF2, a complex of intrinsic ATPase inhibitor INH1 and proton-translocating ATPase in mitochondrial membranes. Binds directly to purified F1-ATPase. The sequence is that of F(1)-ATPase inhibitor STF1, mitochondrial (STF1) from Saccharomyces cerevisiae (strain ATCC 204508 / S288c) (Baker's yeast).